Consider the following 207-residue polypeptide: Thiamine-phosphate synthase (207 aa).

4-amino-2-methyl-5-(diphosphooxymethyl)pyrimidine is bound by residues 38-42 and asparagine 70; that span reads QYRNK. Residues aspartate 71 and aspartate 90 each contribute to the Mg(2+) site. Serine 109 contributes to the 4-amino-2-methyl-5-(diphosphooxymethyl)pyrimidine binding site. Residue 136–138 participates in 2-[(2R,5Z)-2-carboxy-4-methylthiazol-5(2H)-ylidene]ethyl phosphate binding; sequence TAT. Lysine 139 provides a ligand contact to 4-amino-2-methyl-5-(diphosphooxymethyl)pyrimidine. 2-[(2R,5Z)-2-carboxy-4-methylthiazol-5(2H)-ylidene]ethyl phosphate-binding positions include glycine 165 and 185-186; that span reads VS.

This sequence belongs to the thiamine-phosphate synthase family. Mg(2+) is required as a cofactor.

It catalyses the reaction 2-[(2R,5Z)-2-carboxy-4-methylthiazol-5(2H)-ylidene]ethyl phosphate + 4-amino-2-methyl-5-(diphosphooxymethyl)pyrimidine + 2 H(+) = thiamine phosphate + CO2 + diphosphate. The enzyme catalyses 2-(2-carboxy-4-methylthiazol-5-yl)ethyl phosphate + 4-amino-2-methyl-5-(diphosphooxymethyl)pyrimidine + 2 H(+) = thiamine phosphate + CO2 + diphosphate. It carries out the reaction 4-methyl-5-(2-phosphooxyethyl)-thiazole + 4-amino-2-methyl-5-(diphosphooxymethyl)pyrimidine + H(+) = thiamine phosphate + diphosphate. It participates in cofactor biosynthesis; thiamine diphosphate biosynthesis; thiamine phosphate from 4-amino-2-methyl-5-diphosphomethylpyrimidine and 4-methyl-5-(2-phosphoethyl)-thiazole: step 1/1. Functionally, condenses 4-methyl-5-(beta-hydroxyethyl)thiazole monophosphate (THZ-P) and 2-methyl-4-amino-5-hydroxymethyl pyrimidine pyrophosphate (HMP-PP) to form thiamine monophosphate (TMP). This chain is Thiamine-phosphate synthase, found in Xanthomonas campestris pv. campestris (strain 8004).